The chain runs to 122 residues: uncharacterized protein (122 aa).

This is an uncharacterized protein from Rickettsia conorii (strain ATCC VR-613 / Malish 7).